The chain runs to 201 residues: Receptor expression-enhancing protein 6 (201 aa).

The next 3 helical transmembrane spans lie at 36-56, 89-109, and 117-137; these read LAAG…GASL, WVVY…LFWF, and CAFL…LLYH.

This sequence belongs to the DP1 family. As to quaternary structure, interacts with STX3. Interacts with clathrin. Expressed in the inner segment of rod photoreceptors and outer plexiform layer of the retina (at protein level). Expressed in liver, but not detected in brain, muscle, kidney, retinal cone photoreceptors or retinal ganglion cells (at protein level). Highly expressed in the ganglion cell layer of the retina and in liver, and also detected at low levels in kidney and testis. Isoform 1: Expressed in the retina. Isoform 2: Expressed in liver.

The protein resides in the endoplasmic reticulum membrane. It is found in the cytoplasmic vesicle. It localises to the clathrin-coated vesicle membrane. Its function is as follows. Required for correct function and survival of retinal photoreceptors. Required for retinal development. In rod photoreceptors, facilitates stability and/or trafficking of guanylate cyclases and is required to maintain endoplasmic reticulum and mitochondrial homeostasis. May play a role in clathrin-coated intracellular vesicle trafficking of proteins from the endoplasmic reticulum to the retinal rod plasma membrane. This is Receptor expression-enhancing protein 6 (Reep6) from Mus musculus (Mouse).